Reading from the N-terminus, the 803-residue chain is Zinc finger X-linked protein ZXDB (803 aa).

3 disordered regions span residues 1–91, 120–140, and 218–260; these read MEIP…GGDD, EAEE…AGPT, and AAHP…GPRG. Over residues 13–26 the composition is skewed to gly residues; sequence LQGGGGGGIPAGGG. 10 consecutive C2H2-type zinc fingers follow at residues 271–295, 304–328, 334–358, 364–386, 393–417, 424–448, 454–478, 484–508, 514–538, and 547–572; these read YLCP…LLTH, FKCP…LQSH, FGCP…MKGH, FKCE…QRSH, YQCA…NRAH, FSCS…LRSH, FLCD…KRKH, FMCP…SITH, FVCP…SKKH, and SRCP…VKRH. The segment at 271–577 is required for interaction with ZXDC; that stretch reads YLCPEAQCGQ…MVKRHKVGQD (307 aa). The interval 576–703 is required for transcriptional activation; that stretch reads QDLLAQLEAA…NMDEVSSVSV (128 aa).

The protein belongs to the ZXD family. Self-associates. Interacts with ZXDC and CIITA. In terms of tissue distribution, may be expressed in brain, heart, kidney, liver, lung, muscle and placenta.

It localises to the nucleus. Cooperates with CIITA to promote transcription of MHC class I and MHC class II genes. The sequence is that of Zinc finger X-linked protein ZXDB (ZXDB) from Homo sapiens (Human).